We begin with the raw amino-acid sequence, 122 residues long: Holo-[acyl-carrier-protein] synthase (122 aa).

Residues Asp8 and Glu55 each contribute to the Mg(2+) site.

Belongs to the P-Pant transferase superfamily. AcpS family. Requires Mg(2+) as cofactor.

The protein resides in the cytoplasm. It carries out the reaction apo-[ACP] + CoA = holo-[ACP] + adenosine 3',5'-bisphosphate + H(+). Functionally, transfers the 4'-phosphopantetheine moiety from coenzyme A to a Ser of acyl-carrier-protein. The chain is Holo-[acyl-carrier-protein] synthase from Fusobacterium nucleatum subsp. nucleatum (strain ATCC 25586 / DSM 15643 / BCRC 10681 / CIP 101130 / JCM 8532 / KCTC 2640 / LMG 13131 / VPI 4355).